Here is a 241-residue protein sequence, read N- to C-terminus: Uridylate kinase (241 aa).

12–15 contributes to the ATP binding site; it reads KLSG. Gly54 is a binding site for UMP. ATP contacts are provided by Gly55 and Arg59. Residues Asp74 and 135-142 contribute to the UMP site; that span reads TGNPFFTT. The ATP site is built by Thr162, Tyr168, and Asp171.

The protein belongs to the UMP kinase family. In terms of assembly, homohexamer.

The protein resides in the cytoplasm. It carries out the reaction UMP + ATP = UDP + ADP. Its pathway is pyrimidine metabolism; CTP biosynthesis via de novo pathway; UDP from UMP (UMPK route): step 1/1. Inhibited by UTP. Catalyzes the reversible phosphorylation of UMP to UDP. This Magnetococcus marinus (strain ATCC BAA-1437 / JCM 17883 / MC-1) protein is Uridylate kinase.